Consider the following 715-residue polypeptide: Polyribonucleotide nucleotidyltransferase (715 aa).

Residues Asp498 and Asp504 each coordinate Mg(2+). Positions 565–625 constitute a KH domain; it reads PKVCMMQIKP…ETVKKTVAFI (61 aa). Residues 635–706 enclose the S1 motif domain; sequence GTCYQASILR…DRGRIDFLLL (72 aa).

The protein belongs to the polyribonucleotide nucleotidyltransferase family. Mg(2+) serves as cofactor.

It localises to the cytoplasm. It catalyses the reaction RNA(n+1) + phosphate = RNA(n) + a ribonucleoside 5'-diphosphate. Its function is as follows. Involved in mRNA degradation. Catalyzes the phosphorolysis of single-stranded polyribonucleotides processively in the 3'- to 5'-direction. This is Polyribonucleotide nucleotidyltransferase from Onion yellows phytoplasma (strain OY-M).